Consider the following 303-residue polypeptide: Propanal dehydrogenase (CoA-propanoylating) (303 aa).

12-15 (SGNI) contributes to the NAD(+) binding site. Residue cysteine 127 is the Acyl-thioester intermediate of the active site. NAD(+) is bound by residues 158 to 166 (SAGPGTRAN) and asparagine 277.

The protein belongs to the acetaldehyde dehydrogenase family. As to quaternary structure, monomer. Forms a heterotetramer composed of two aldolase (HsaF) and two dehydrogenase (HsaG) subunits.

It carries out the reaction propanal + NAD(+) + CoA = propanoyl-CoA + NADH + H(+). The enzyme catalyses acetaldehyde + NAD(+) + CoA = acetyl-CoA + NADH + H(+). Involved in cholesterol degradation. Catalyzes the conversion of propanal to propanoyl-CoA, using NAD(+) and coenzyme A. This is Propanal dehydrogenase (CoA-propanoylating) from Mycobacterium bovis (strain ATCC BAA-935 / AF2122/97).